Consider the following 274-residue polypeptide: tRNA-cytidine(32) 2-sulfurtransferase (274 aa).

A PP-loop motif motif is present at residues 40–45; sequence SGGKDS. The [4Fe-4S] cluster site is built by Cys-115, Cys-118, and Cys-206.

It belongs to the TtcA family. Homodimer. It depends on Mg(2+) as a cofactor. [4Fe-4S] cluster serves as cofactor.

It localises to the cytoplasm. It carries out the reaction cytidine(32) in tRNA + S-sulfanyl-L-cysteinyl-[cysteine desulfurase] + AH2 + ATP = 2-thiocytidine(32) in tRNA + L-cysteinyl-[cysteine desulfurase] + A + AMP + diphosphate + H(+). Its pathway is tRNA modification. Catalyzes the ATP-dependent 2-thiolation of cytidine in position 32 of tRNA, to form 2-thiocytidine (s(2)C32). The sulfur atoms are provided by the cysteine/cysteine desulfurase (IscS) system. This Pseudomonas fluorescens (strain ATCC BAA-477 / NRRL B-23932 / Pf-5) protein is tRNA-cytidine(32) 2-sulfurtransferase.